The following is a 675-amino-acid chain: PTS system glucose-specific EIICBA component (675 aa).

The PTS EIIC type-1 domain maps to 3-414; it reads KKLFGQMQRI…FNYKTPGRED (412 aa). A run of 11 helical transmembrane segments spans residues 16-36, 59-79, 81-101, 126-146, 170-190, 211-231, 273-293, 303-323, 328-348, 355-375, and 378-398; these read LMLPVAILPAAGLLLAIGTAF, MLTGAGGIIFDNLPIIFALGV, IGLAGGDGVAAIAAFVGFIIL, VLGIPTLQTGVFGGIIIGALA, FVPIMMATTSFILAFPMAIIW, LAVFLFGFIKRLLIPFGLHHI, FMQGEFPVMMFGLPAAALAIY, VVAGLMISAALTSFLTGITEP, FLFVAPFLFVIHAVLDGLSFL, VHLGYTFSGGFIDYVLLGILP, and TAWWLVIPVGIIYAVIYYFVF. A PTS EIIB type-1 domain is found at 425 to 506; the sequence is SQLPFDVLKA…AKIISGEITK (82 aa). Cysteine 447 functions as the Phosphocysteine intermediate; for EIIB activity in the catalytic mechanism. The 105-residue stretch at 547-651 folds into the PTS EIIA type-1 domain; it reads DKVFSEKMMG…SIITPVIITN (105 aa). Catalysis depends on histidine 599, which acts as the Tele-phosphohistidine intermediate; for EIIA activity.

It is found in the cell membrane. It catalyses the reaction N(pros)-phospho-L-histidyl-[protein] + D-glucose(out) = D-glucose 6-phosphate(in) + L-histidyl-[protein]. Functionally, the phosphoenolpyruvate-dependent sugar phosphotransferase system (sugar PTS), a major carbohydrate active transport system, catalyzes the phosphorylation of incoming sugar substrates concomitantly with their translocation across the cell membrane. This system is involved in glucose transport. This chain is PTS system glucose-specific EIICBA component (ptsG), found in Staphylococcus epidermidis.